Reading from the N-terminus, the 74-residue chain is Ubiquitin-like protein FUBI (74 aa).

This sequence belongs to the ubiquitin family.

In Mus spicilegus (Steppe mouse), this protein is Ubiquitin-like protein FUBI (Fau).